The sequence spans 572 residues: Hexokinase (572 aa).

Positions Asp-49 to Ala-492 constitute a Hexokinase domain. A hexokinase small subdomain region spans residues Asn-105–Ile-237. D-glucose 6-phosphate contacts are provided by residues Asp-116 to Thr-120 and Ser-185. Asp-116–Asn-121 is an ATP binding site. Substrate-binding positions include Ser-185–Tyr-186, Thr-202–Lys-203, and Asn-238–Asp-239. Positions Asn-238–Asp-481 are hexokinase large subdomain. 2 residues coordinate D-glucose 6-phosphate: Asp-239 and Thr-263. Thr-263 provides a ligand contact to ATP. Substrate is bound by residues Asn-266, Glu-297, and Asp-331. Residues Gly-336–Lys-337, Thr-373–Ser-377, and Ser-448–Tyr-452 contribute to the ATP site. D-glucose 6-phosphate-binding positions include Asp-446 to Ser-448 and Ser-483.

Belongs to the hexokinase family.

It carries out the reaction a D-hexose + ATP = a D-hexose 6-phosphate + ADP + H(+). It catalyses the reaction D-mannose + ATP = D-mannose 6-phosphate + ADP + H(+). The enzyme catalyses D-fructose + ATP = D-fructose 6-phosphate + ADP + H(+). The catalysed reaction is D-glucose + ATP = D-glucose 6-phosphate + ADP + H(+). Its pathway is carbohydrate metabolism; hexose metabolism. It functions in the pathway carbohydrate degradation; glycolysis; D-glyceraldehyde 3-phosphate and glycerone phosphate from D-glucose: step 1/4. With respect to regulation, activated by glucose-6-phosphate. Inhibited by N-acetylglucosamine, glucosamine, mannoheptulose and ADP. Active against glucose, fructose, mannose, maltose and galactose. This chain is Hexokinase, found in Brugia malayi (Filarial nematode worm).